We begin with the raw amino-acid sequence, 397 residues long: Subtilisin-like serine protease Pen ch 13.0101 (397 aa).

Residues 1–19 form the signal peptide; it reads MGFLKVLATSLATLAVVDA. Positions 20-115 are cleaved as a propeptide — removed in mature form; the sequence is GTLLTASNTD…IEPDMIVNAT (96 aa). In terms of domain architecture, Inhibitor I9 spans 35–113; it reads SYIVVMNDDV…KYIEPDMIVN (79 aa). An N-linked (GlcNAc...) asparagine glycan is attached at asparagine 113. One can recognise a Peptidase S8 domain in the interval 125–397; sequence SWGLARISSK…SKLLYNGINV (273 aa). Catalysis depends on charge relay system residues aspartate 157 and histidine 188. N-linked (GlcNAc...) asparagine glycans are attached at residues asparagine 249 and asparagine 284. Serine 343 serves as the catalytic Charge relay system.

Belongs to the peptidase S8 family.

It is found in the secreted. Functionally, serine protease. The protein is Subtilisin-like serine protease Pen ch 13.0101 of Penicillium rubens.